We begin with the raw amino-acid sequence, 288 residues long: Borealin (288 aa).

A required for interaction with INCENP region spans residues 1 to 58 (MAPKKRSSRGTRTNTLRSRKLASFLKDFDREVQVRTKQIESDRQTLLKEVENLYNIEV). The tract at residues 1–88 (MAPKKRSSRG…NRQALEEAAT (88 aa)) is required for centromere localization. Residues 1–149 (MAPKKRSSRG…RKSHKNLRSA (149 aa)) are required for interaction with SENP3. The interval 10 to 109 (GTRTNTLRSR…TAEAIQTPLK (100 aa)) is required to form a minimal CPC core complex that localizes to the central spindle and midbody and properly executes the role of the CPC during cytokinesis. Residues 20–78 (KLASFLKDFDREVQVRTKQIESDRQTLLKEVENLYNIEVLRLPKALQVMKWLDYFALGG) form a required for interaction with INCENP and BIRC5 region. At Thr88 the chain carries Phosphothreonine; by TTK. A Citrulline modification is found at Arg91. Thr94 carries the post-translational modification Phosphothreonine; by TTK. The residue at position 106 (Thr106) is a Phosphothreonine. Residue Ser110 is modified to Phosphoserine. The span at 124–134 (KEEEEDEEEEG) shows a compositional bias: acidic residues. The tract at residues 124–173 (KEEEEDEEEEGGGGGGRKSHKNLRSARVKRCPPSKKRTQSIQGRSRSKRL) is disordered. A compositionally biased stretch (basic residues) spans 140 to 161 (RKSHKNLRSARVKRCPPSKKRT). Residue Lys144 forms a Glycyl lysine isopeptide (Lys-Gly) (interchain with G-Cter in SUMO2) linkage. A Phosphoserine; by AURKB modification is found at Ser174. Residues Thr197 and Thr212 each carry the phosphothreonine modification. Phosphoserine occurs at positions 227, 232, 246, and 252.

Belongs to the borealin family. May form homooligomers and homodimers. Component of the chromosomal passenger complex (CPC) composed of at least BIRC5/survivin, CDCA8/borealin, INCENP, AURKB or AURKC; in the complex forms a triple-helix bundle-based subcomplex with INCENP and BIRC5. Interacts with SENP3, UBE2I and RANBP2. Interacts (phosphorylated) with SGO1 and SGO2; the association is dependent on CDK1. Phosphorylated by TTK, essentially at Thr-88 and Thr-94. Phosphorylation (probably by CDK1) promotes targeting of the CPC to centromeric DNA. Post-translationally, sumoylated by UBE2I and RANBP2. Desumoylated by SENP3 through the removal of SUMO2 and SUMO3. In terms of processing, citrullinated by PADI4.

The protein resides in the nucleus. Its subcellular location is the nucleolus. It localises to the cytoplasm. It is found in the chromosome. The protein localises to the centromere. The protein resides in the cytoskeleton. Its subcellular location is the spindle. In terms of biological role, component of the chromosomal passenger complex (CPC), a complex that acts as a key regulator of mitosis. The CPC complex has essential functions at the centromere in ensuring correct chromosome alignment and segregation and is required for chromatin-induced microtubule stabilization and spindle assembly. In the complex, it may be required to direct the CPC to centromeric DNA. This is Borealin (Cdca8) from Rattus norvegicus (Rat).